Here is a 711-residue protein sequence, read N- to C-terminus: Ferric reductase transmembrane component 3 (711 aa).

Residues methionine 1–alanine 20 form the signal peptide. Residues serine 21 to tyrosine 166 lie on the Extracellular side of the membrane. Residues asparagine 85, asparagine 108, asparagine 120, and asparagine 134 are each glycosylated (N-linked (GlcNAc...) asparagine). A helical membrane pass occupies residues glycine 167 to leucine 187. Over serine 188–glutamate 237 the chain is Cytoplasmic. The helical transmembrane segment at glycine 238–tyrosine 258 threads the bilayer. The Extracellular portion of the chain corresponds to aspartate 259–serine 280. The Ferric oxidoreductase domain occupies serine 280–isoleucine 414. Residues glycine 281–leucine 301 form a helical membrane-spanning segment. Residues glutamate 302–arginine 321 lie on the Cytoplasmic side of the membrane. 2 residues coordinate heme: histidine 316 and histidine 330. The helical transmembrane segment at methionine 322–tyrosine 341 threads the bilayer. Residues lysine 342–tryptophan 353 lie on the Extracellular side of the membrane. The chain crosses the membrane as a helical span at residues glutamine 354–phenylalanine 374. Topologically, residues arginine 375–lysine 376 are cytoplasmic. The helical transmembrane segment at phenylalanine 377–cysteine 397 threads the bilayer. A heme-binding site is contributed by histidine 386. Tryptophan 398 is a topological domain (extracellular). The helical transmembrane segment at glutamate 399–isoleucine 419 threads the bilayer. Heme is bound at residue histidine 400. The 120-residue stretch at alanine 415 to valine 534 folds into the FAD-binding FR-type domain. The Cytoplasmic segment spans residues aspartate 420–tryptophan 711. An FAD-binding site is contributed by histidine 479 to aspartate 485. NADP(+) contacts are provided by residues glycine 526–glycine 529 and cysteine 677–glycine 678.

This sequence belongs to the ferric reductase (FRE) family. FAD is required as a cofactor. Requires heme as cofactor.

Its subcellular location is the cell membrane. The catalysed reaction is 2 a Fe(II)-siderophore + NADP(+) + H(+) = 2 a Fe(III)-siderophore + NADPH. Its function is as follows. Siderophore-iron reductase responsible for reducing extracellular iron prior to import. Catalyzes the reductive uptake of Fe(3+) bound to di- and trihydroxamate siderophores. Fe(3+) is reduced to Fe(2+), which then dissociates from the siderophore and can be imported by the high-affinity Fe(2+) transport complex in the plasma membrane. This is Ferric reductase transmembrane component 3 (FRE3) from Saccharomyces cerevisiae (strain ATCC 204508 / S288c) (Baker's yeast).